The primary structure comprises 515 residues: Maturase K (515 aa).

The protein belongs to the intron maturase 2 family. MatK subfamily.

It is found in the plastid. Its subcellular location is the chloroplast. Functionally, usually encoded in the trnK tRNA gene intron. Probably assists in splicing its own and other chloroplast group II introns. The protein is Maturase K of Cedrus deodara (Deodar cedar).